The following is a 585-amino-acid chain: MSNPIQAPDGGQGWPAAALGPAQRAVAWKRLGTEQFDVVVIGGGVVGSGCALDAATRGLKVALVEARDLASGTSSRSSKMFHGGLRYLEQLEFGLVREALYERELSLTTLAPHLVKPLPFLFPLTKRWWERPYIAAGIFLYDRLGGAKSVPAQRHFTRAGALRLSPGLKRSSLIGGIRYYDTVVDDARHTMTVARTAAHYGAVVRCSTQVVALLREGDRVIGVGVRDSENGAVAEVRGHVVVNATGVWTDEIQALSKQRGRFQVRASKGVHVVVPRDRIVSDVAMILRTEKSVMFVIPWGSHWIIGTTDTDWNLDLAHPAATKADIDYILGTVNAVLATPLTHADIDGVYAGLRPLLAGESDDTSKLSREHAVAVPAAGLVAIAGGKYTTYRVMAADAIDAAVQFIPARVAPSITEKVSLLGADGYFALVNQAEHVGALQGLHPYRVRHLLDRYGSLISDVLAMAASDPSLLSPITEAPGYLKVEAAYAAAAEGALHLEDILARRMRISIEYPHRGVDCAREVAEVVAPVLGWTAADIDREVANYMARVEAEVLSQAQPDDVSADMLRASAPEARAEILEPVPLD.

37 to 65 serves as a coordination point for FAD; it reads DVVVIGGGVVGSGCALDAATRGLKVALVE.

It belongs to the FAD-dependent glycerol-3-phosphate dehydrogenase family. Requires FAD as cofactor.

It localises to the cytoplasm. It carries out the reaction a quinone + sn-glycerol 3-phosphate = dihydroxyacetone phosphate + a quinol. The chain is Glycerol-3-phosphate dehydrogenase 2 (glpD2) from Mycobacterium bovis (strain ATCC BAA-935 / AF2122/97).